Here is a 258-residue protein sequence, read N- to C-terminus: Axonemal dynein light intermediate polypeptide 1 (258 aa).

Disordered stretches follow at residues 19–60 (RNTE…CVPD) and 207–231 (VNEQ…EEKK). The span at 34-48 (SPQQPGPSGSAPQLP) shows a compositional bias: low complexity. The stretch at 176-255 (MRKALQAEQG…LKAQLEGIIA (80 aa)) forms a coiled coil.

This sequence belongs to the inner dynein arm light chain family. As to quaternary structure, interacts with CFAP45. Interacts with DYNC1H1.

The protein localises to the cell projection. It is found in the cilium. Its subcellular location is the flagellum. It localises to the dynein axonemal particle. The protein resides in the cytoplasm. In terms of biological role, involved in sperm flagellum assembly. This chain is Axonemal dynein light intermediate polypeptide 1 (DNALI1), found in Macaca fascicularis (Crab-eating macaque).